A 180-amino-acid chain; its full sequence is 3-hexulose-6-phosphate isomerase (180 aa).

The SIS domain occupies 33-167 (LIDRIIKAKK…IAEIMKRLNL (135 aa)). Substrate-binding positions include S51 and 90 to 95 (SGSGRT). Residue E147 is the Proton acceptor of the active site.

It belongs to the SIS family. PHI subfamily. Homotetramer.

The enzyme catalyses D-arabino-hex-3-ulose 6-phosphate = beta-D-fructose 6-phosphate. It participates in carbohydrate biosynthesis; D-ribose 5-phosphate biosynthesis. Functionally, catalyzes the isomerization between 3-hexulose 6-phosphate and fructose 6-phosphate. This is 3-hexulose-6-phosphate isomerase (phi) from Methanocaldococcus jannaschii (strain ATCC 43067 / DSM 2661 / JAL-1 / JCM 10045 / NBRC 100440) (Methanococcus jannaschii).